A 2727-amino-acid chain; its full sequence is E3 ubiquitin-protein ligase Ufd4 (2727 aa).

Disordered stretches follow at residues Thr-247 to Asp-271 and Arg-365 to Thr-389. The segment covering Arg-365 to Gln-374 has biased composition (polar residues). ANK repeat units follow at residues Val-422–Lys-451, Gln-453–Leu-482, and Asp-486–Pro-518. Residues Ala-682–Glu-702 are disordered. One can recognise an MIB/HERC2 domain in the interval Gln-1322–Glu-1392. 2 stretches are compositionally biased toward polar residues: residues Gln-1401–Ser-1430 and Lys-1437–Thr-1448. 6 disordered regions span residues Gln-1401–Thr-1448, Asn-1483–Pro-1512, Glu-1570–Asp-1592, Tyr-1845–Ala-1871, Ala-1905–Glu-1930, and Ser-2092–Leu-2115. A compositionally biased stretch (low complexity) spans Ser-1575 to Asp-1592. Over residues Asp-1909–Glu-1930 the composition is skewed to acidic residues. Residues Pro-2104–Leu-2115 are compositionally biased toward polar residues. Residues Arg-2289–Asn-2727 form the HECT domain. Catalysis depends on Cys-2696, which acts as the Glycyl thioester intermediate.

The protein belongs to the UPL family. K-HECT subfamily.

The enzyme catalyses S-ubiquitinyl-[E2 ubiquitin-conjugating enzyme]-L-cysteine + [acceptor protein]-L-lysine = [E2 ubiquitin-conjugating enzyme]-L-cysteine + N(6)-ubiquitinyl-[acceptor protein]-L-lysine.. It functions in the pathway protein modification; protein ubiquitination. Its function is as follows. E3 ubiquitin-protein ligase which accepts ubiquitin from an E2 ubiquitin-conjugating enzyme in the form of a thioester and then directly transfers the ubiquitin to targeted substrates. Involved in the negative regulation of the Ras/MAPK signaling pathway in the wing by acting with the E2 enzyme Unc6 and the putative E3 ligases poe and Kcmf1 to mediate the ubiquitination and proteasomal degradation of rl/MAPK. The chain is E3 ubiquitin-protein ligase Ufd4 from Drosophila melanogaster (Fruit fly).